Here is a 66-residue protein sequence, read N- to C-terminus: Large ribosomal subunit protein bL35 (66 aa).

The span at 1–16 (MPKQKTHRASAKRFKR) shows a compositional bias: basic residues. A disordered region spans residues 1–20 (MPKQKTHRASAKRFKRTGSG).

It belongs to the bacterial ribosomal protein bL35 family.

The protein is Large ribosomal subunit protein bL35 of Streptococcus thermophilus (strain ATCC BAA-250 / LMG 18311).